The sequence spans 716 residues: 1,4-alpha-glucan branching enzyme GlgB (716 aa).

Asp394 serves as the catalytic Nucleophile. The active-site Proton donor is Glu447.

Belongs to the glycosyl hydrolase 13 family. GlgB subfamily. Monomer.

The catalysed reaction is Transfers a segment of a (1-&gt;4)-alpha-D-glucan chain to a primary hydroxy group in a similar glucan chain.. The protein operates within glycan biosynthesis; glycogen biosynthesis. In terms of biological role, catalyzes the formation of the alpha-1,6-glucosidic linkages in glycogen by scission of a 1,4-alpha-linked oligosaccharide from growing alpha-1,4-glucan chains and the subsequent attachment of the oligosaccharide to the alpha-1,6 position. This chain is 1,4-alpha-glucan branching enzyme GlgB, found in Photobacterium profundum (strain SS9).